We begin with the raw amino-acid sequence, 197 residues long: 3-isopropylmalate dehydratase small subunit (197 aa).

It belongs to the LeuD family. LeuD type 1 subfamily. Heterodimer of LeuC and LeuD.

It catalyses the reaction (2R,3S)-3-isopropylmalate = (2S)-2-isopropylmalate. The protein operates within amino-acid biosynthesis; L-leucine biosynthesis; L-leucine from 3-methyl-2-oxobutanoate: step 2/4. Functionally, catalyzes the isomerization between 2-isopropylmalate and 3-isopropylmalate, via the formation of 2-isopropylmaleate. The chain is 3-isopropylmalate dehydratase small subunit from Corynebacterium glutamicum (strain R).